The primary structure comprises 351 residues: S-adenosylmethionine:tRNA ribosyltransferase-isomerase (351 aa).

It belongs to the QueA family. Monomer.

The protein localises to the cytoplasm. The enzyme catalyses 7-aminomethyl-7-carbaguanosine(34) in tRNA + S-adenosyl-L-methionine = epoxyqueuosine(34) in tRNA + adenine + L-methionine + 2 H(+). Its pathway is tRNA modification; tRNA-queuosine biosynthesis. Functionally, transfers and isomerizes the ribose moiety from AdoMet to the 7-aminomethyl group of 7-deazaguanine (preQ1-tRNA) to give epoxyqueuosine (oQ-tRNA). The protein is S-adenosylmethionine:tRNA ribosyltransferase-isomerase of Photobacterium profundum (strain SS9).